A 1700-amino-acid chain; its full sequence is MSSAQCPALVCVMSRLRFWGPWPLLMWQLLWLLVKEAQPLEWVKDPLQLTSNPLGPPDSWSSHSSHFPRESPHAPTLPADPWDFDHLGPSASSEMPAPPQESTENLVPFLDTWDSAGEQPLEPEQFLASQQDLKDKLSPQERLPVSPKKLKKDPAQRWSLAEIIGITRQLSTPQSQKQTLQNEYSSTDTPYPGSLPPELRVKSDEPPGPSEQVGPSQFHLEPETQNPETLEDIQSSSLQQEAPAQLPQLLEEEPSSMQQEAPALPPESSMESLTLPNHEVSVQPPGEDQAYYHLPNITVKPADVEVTITSEPTNETESSQAQQETPIQFPEEVEPSATQQEAPIEPPVPPMEHELSISEQQQPVQPSESPREVESSPTQQETPGQPPEHHEVTVSPPGHHQTHHLASPSVSVKPPDVQLTIAAEPSAEVGTSLVHQEATTRLSGSGNDVEPPAIQHGGPPLLPESSEEAGPLAVQQETSFQSPEPINNENPSPTQQEAAAEHPQTAEEGESSLTHQEAPAQTPEFPNVVVAQPPEHSHLTQATVQPLDLGFTITPESKTEVELSPTMKETPTQPPKKVVPQLRVYQGVTNPTPGQDQAQHPVSPSVTVQLLDLGLTITPEPTTEVGHSTPPKRTIVSPKHPEVTLPHPDQVQTQHSHLTRATVQPLDLGFTITPKSMTEVEPSTALMTTAPPPGHPEVTLPPSDKGQAQHSHLTQATVQPLDLELTITTKPTTEVKPSPTTEETSTQPPDLGLAIIPEPTTETRHSTALEKTTAPRPDRVQTLHRSLTEVTGPPTELEPAQDSLVQSESYTQNKALTAPEEHKASTSTNICELCTCGDEMLSCIDLNPEQRLRQVPVPEPNTHNGTFTILNFQGNYISYIDGNVWKAYSWTEKLILRENNLTELHKDSFEGLLSLQYLDLSCNKIQSIERHTFEPLPFLKFINLSCNVITELSFGTFQAWHGMQFLHKLILNHNPLTTVEDPYLFKLPALKYLDMGTTLVPLTTLKNILMMTVELEKLILPSHMACCLCQFKNSIEAVCKTVKLHCNSACLTNTTHCPEEASVGNPEGAFMKVLQARKNYTSTELIVEPEEPSDSSGINLSGFGSEQLDTNDESDFISTLSYILPYFSAVNLDVKSLLLPFIKLPTTGNSLAKIQTVGQNRQRVKRVLMGPRSIQKRHFKEVGRQSIRREQGAQASVENAAEEKRLGSPAPREVEQPHTQQGPEKLAGNAVYTKPSFTQEHKAAVSVLKPFSKGAPSTSSPAKALPQVRDRWKDLTHAISILESAKARVTNTKTSKPIVHARKKYRFHKTRSHVTHRTPKVKKSPKVRKKSYLSRLMLANRLPFSAAKSLINSPSQGAFSSLGDLSPQENPFLEVSAPSEHFIENNNTKHTTARNAFEENDFMENTNMPEGTISENTNYNHPHEADSAGTAFNLGPTVKQTETKWEYNNVGTDLSPEPKSFNYPLLSSPGDQFEIQLTQQLQSLIPNNNVRRLIAHVIRTLKMDCSGAHVQVTCAKLISRTGHLMKLLSGQQEVKASKIEWDTDQWKIENYINESTEAQSEQKEKSLELKKEVPGYGYTDKLILALIVTGILTILIILFCLIVICCHRRSLQEDEEGFSRGIFRFLPWRGCSSRRESQDGLSSFGQPLWFKDMYKPLSATRINNHAWKLHKKSSNEDKILNRDPGDSEAPTEEEESEALP.

The first 35 residues, 1–35 (MSSAQCPALVCVMSRLRFWGPWPLLMWQLLWLLVK), serve as a signal peptide directing secretion. Topologically, residues 36–1582 (EAQPLEWVKD…VPGYGYTDKL (1547 aa)) are extracellular. The span at 54–65 (LGPPDSWSSHSS) shows a compositional bias: polar residues. 6 disordered regions span residues 54–104 (LGPP…ESTE), 130–156 (QQDLKDKLSPQERLPVSPKKLKKDPAQ), 169–534 (QLST…AQPP), 559–580 (TEVELSPTMKETPTQPPKKVVP), 619–642 (PEPTTEVGHSTPPKRTIVSPKHPE), and 729–752 (TKPTTEVKPSPTTEETSTQPPDLG). One copy of the LRR 1 repeat lies at 137 to 160 (LSPQERLPVSPKKLKKDPAQRWSL). Composition is skewed to polar residues over residues 169-189 (QLSTPQSQKQTLQNEYSSTDT) and 223-237 (ETQNPETLEDIQSSS). 2 LRR repeats span residues 230–253 (LEDIQSSSLQQEAPAQLPQLLEEE) and 267–290 (ESSMESLTLPNHEVSVQPPGEDQA). Positions 238-249 (LQQEAPAQLPQL) are enriched in low complexity. A glycan (N-linked (GlcNAc...) asparagine) is linked at Asn-296. Over residues 307-326 (TITSEPTNETESSQAQQETP) the composition is skewed to polar residues. Residues 358 to 368 (SEQQQPVQPSE) show a composition bias toward low complexity. Positions 433 to 446 (LVHQEATTRLSGSG) are enriched in polar residues. The segment covering 482 to 493 (SPEPINNENPSP) has biased composition (low complexity). Residues 729-749 (TKPTTEVKPSPTTEETSTQPP) are compositionally biased toward low complexity. LRR repeat units lie at residues 864 to 887 (NGTFTILNFQGNYISYIDGNVWKA), 888 to 911 (YSWTEKLILRENNLTELHKDSFEG), 912 to 935 (LLSLQYLDLSCNKIQSIERHTFEP), 937 to 959 (PFLKFINLSCNVITELSFGTFQA), 963 to 987 (MQFLHKLILNHNPLTTVEDPYLFKL), and 1002 to 1027 (LTTLKNILMMTVELEKLILPSHMACC). The N-linked (GlcNAc...) asparagine glycan is linked to Asn-1079. Residues 1124 to 1146 (LPYFSAVNLDVKSLLLPFIKLPT) form an LRR 10 repeat. Basic and acidic residues-rich tracts occupy residues 1182 to 1191 (VGRQSIRREQ) and 1201 to 1216 (AEEKRLGSPAPREVEQ). 2 disordered regions span residues 1182–1227 (VGRQ…EKLA) and 1309–1328 (KTRSHVTHRTPKVKKSPKVR). A helical membrane pass occupies residues 1583-1603 (ILALIVTGILTILIILFCLIV). The Cytoplasmic segment spans residues 1604–1700 (ICCHRRSLQE…TEEEESEALP (97 aa)). Basic and acidic residues predominate over residues 1675–1685 (NEDKILNRDPG). The disordered stretch occupies residues 1675–1700 (NEDKILNRDPGDSEAPTEEEESEALP). Residues 1689-1700 (APTEEEESEALP) are compositionally biased toward acidic residues.

It belongs to the LRRC37A family.

It is found in the membrane. This Homo sapiens (Human) protein is Leucine-rich repeat-containing protein 37A2 (LRRC37A2).